The sequence spans 729 residues: Fatty acid oxidation complex subunit alpha (729 aa).

Residues 1 to 189 (MLYKGDTLYL…KIGLVDGVVK (189 aa)) are enoyl-CoA hydratase/isomerase. Aspartate 296 provides a ligand contact to substrate. A 3-hydroxyacyl-CoA dehydrogenase region spans residues 311 to 729 (ETPKQAAVLG…ARPVGSLKTA (419 aa)). Residues methionine 324, aspartate 343, 400–402 (VVE), lysine 407, and serine 429 each bind NAD(+). Histidine 450 functions as the For 3-hydroxyacyl-CoA dehydrogenase activity in the catalytic mechanism. Asparagine 453 contributes to the NAD(+) binding site. Substrate is bound by residues asparagine 500 and tyrosine 660. The disordered stretch occupies residues 708–729 (RHNEPYYPPVEPARPVGSLKTA).

This sequence in the N-terminal section; belongs to the enoyl-CoA hydratase/isomerase family. It in the C-terminal section; belongs to the 3-hydroxyacyl-CoA dehydrogenase family. In terms of assembly, heterotetramer of two alpha chains (FadB) and two beta chains (FadA).

It carries out the reaction a (3S)-3-hydroxyacyl-CoA + NAD(+) = a 3-oxoacyl-CoA + NADH + H(+). The catalysed reaction is a (3S)-3-hydroxyacyl-CoA = a (2E)-enoyl-CoA + H2O. The enzyme catalyses a 4-saturated-(3S)-3-hydroxyacyl-CoA = a (3E)-enoyl-CoA + H2O. It catalyses the reaction (3S)-3-hydroxybutanoyl-CoA = (3R)-3-hydroxybutanoyl-CoA. It carries out the reaction a (3Z)-enoyl-CoA = a 4-saturated (2E)-enoyl-CoA. The catalysed reaction is a (3E)-enoyl-CoA = a 4-saturated (2E)-enoyl-CoA. The protein operates within lipid metabolism; fatty acid beta-oxidation. Involved in the aerobic and anaerobic degradation of long-chain fatty acids via beta-oxidation cycle. Catalyzes the formation of 3-oxoacyl-CoA from enoyl-CoA via L-3-hydroxyacyl-CoA. It can also use D-3-hydroxyacyl-CoA and cis-3-enoyl-CoA as substrate. The sequence is that of Fatty acid oxidation complex subunit alpha from Salmonella choleraesuis (strain SC-B67).